The sequence spans 82 residues: Antitoxin MazE8 (82 aa).

In terms of assembly, forms a complex with cognate toxin MazF8.

Functionally, antitoxin component of a type II toxin-antitoxin (TA) system. Its cognate toxin is MazF8. In Mycobacterium tuberculosis (strain ATCC 25618 / H37Rv), this protein is Antitoxin MazE8 (mazE8).